The primary structure comprises 217 residues: D-methionine transport system permease protein MetI (217 aa).

Residues 13 to 204 (VWETLMMTFV…LLVILVYLIQ (192 aa)) enclose the ABC transmembrane type-1 domain. A run of 5 helical transmembrane segments spans residues 20–40 (TFVSGFFGFVLGLPVGVLLYV), 58–78 (GVVNIFRSIPFIILLVWMIPF), 81–101 (MIVGTSIGLQAAIVPLTVGAA), 152–172 (ITLITLVGYSAMGGAVGAGGL), and 186–206 (ATVMNTVLVLLVILVYLIQLS).

This sequence belongs to the binding-protein-dependent transport system permease family. CysTW subfamily.

Its subcellular location is the cell inner membrane. In terms of biological role, part of the binding-protein-dependent transport system for D-methionine and the toxic methionine analog alpha-methyl-methionine. Probably responsible for the translocation of the substrate across the membrane. The protein is D-methionine transport system permease protein MetI (metI) of Yersinia pestis.